The following is an 82-amino-acid chain: Envelope small membrane protein (82 aa).

Residues 1 to 19 are Virion surface-facing; it reads MTFPRALTVIDDNGMVISI. The helical transmembrane segment at 20-40 threads the bilayer; it reads IFWFLLIIILILFSIALLNII. Residues 41 to 82 lie on the Intravirion side of the membrane; the sequence is KLCMVCCNLGRTVIIVPARHAYDAYKNFMQIRAYNPDEALLV.

This sequence belongs to the alphacoronaviruses E protein family. In terms of assembly, homopentamer. Interacts with membrane protein M in the budding compartment of the host cell, which is located between endoplasmic reticulum and the Golgi complex. Interacts with Nucleoprotein.

The protein resides in the host Golgi apparatus membrane. Its function is as follows. Plays a central role in virus morphogenesis and assembly. Acts as a viroporin and self-assembles in host membranes forming pentameric protein-lipid pores that allow ion transport. Also plays a role in the induction of apoptosis. The protein is Envelope small membrane protein of Canine coronavirus (strain Insavc-1) (CCoV).